A 157-amino-acid polypeptide reads, in one-letter code: Probable succinate transporter subunit YjjB (157 aa).

4 helical membrane passes run 6–26 (FFMALMQDMILSAIPAVGFAM), 55–75 (AGFNIEWSTFMASLLVGSIGI), 87–107 (VFTVAAVIPMFPGISAYTAMI), and 129–149 (FLKASSIVGALSIGLSVPGLW).

It belongs to the ThrE exporter (TC 2.A.79) family. The transporter is composed of YjjB and YjjP.

The protein resides in the cell inner membrane. Its function is as follows. Involved in succinate export with YjjP. Both proteins are required for export. The chain is Probable succinate transporter subunit YjjB from Salmonella arizonae (strain ATCC BAA-731 / CDC346-86 / RSK2980).